We begin with the raw amino-acid sequence, 326 residues long: Malate dehydrogenase (326 aa).

Residue Gly12–Ala18 participates in NAD(+) binding. Arg93 and Arg99 together coordinate substrate. NAD(+)-binding positions include Asn106, Gln113, and Val130 to Asn132. 2 residues coordinate substrate: Asn132 and Arg163. The active-site Proton acceptor is the His188.

It belongs to the LDH/MDH superfamily. MDH type 2 family.

It carries out the reaction (S)-malate + NAD(+) = oxaloacetate + NADH + H(+). In terms of biological role, catalyzes the reversible oxidation of malate to oxaloacetate. This is Malate dehydrogenase from Corynebacterium diphtheriae (strain ATCC 700971 / NCTC 13129 / Biotype gravis).